The primary structure comprises 56 residues: Ovomucoid (56 aa).

The Kazal-like domain occupies 6-56 (VDCSEYPKPACTMEQRPLCGSDNKTYGNKCNFCNAVVESNGTLTLSHFGKC). Disulfide bonds link Cys8-Cys38, Cys16-Cys35, and Cys24-Cys56. N-linked (GlcNAc...) asparagine glycosylation is present at Asn45.

It localises to the secreted. The chain is Ovomucoid from Afropavo congensis (Congo peafowl).